The chain runs to 4981 residues: Protocadherin Fat 4 (4981 aa).

Positions 1–38 are cleaved as a signal peptide; the sequence is MDLAPDRATGRPWLPLHTLSVSQLLRVFWLLSLLPGQA. The Extracellular segment spans residues 39-4504; sequence WVHGAEPRQV…PEEISLPLWA (4466 aa). 34 consecutive Cadherin domains span residues 43 to 135, 136 to 250, 251 to 353, 359 to 475, 476 to 582, 584 to 689, 690 to 793, 794 to 893, 894 to 996, 997 to 1100, 1101 to 1210, 1211 to 1315, 1316 to 1420, 1421 to 1529, 1529 to 1629, 1630 to 1740, 1741 to 1841, 1842 to 1944, 1945 to 2051, 2051 to 2154, 2155 to 2259, 2260 to 2364, 2365 to 2466, 2467 to 2567, 2568 to 2669, 2670 to 2773, 2773 to 2872, 2873 to 2983, 2984 to 3089, 3090 to 3194, 3195 to 3298, 3299 to 3404, 3405 to 3510, and 3509 to 3620; these read AEPR…APVF, PDPS…PPVF, GSSH…DPVV, PATS…PPVF, SQQV…KPVF, QPEG…SPVF, YPVQ…PPVF, SQVA…SPHF, LQAI…SPVF, DQLS…RPLF, NSTN…APKF, LKDF…TPSF, PKST…PPSF, PPGD…VPMF, FISQ…GPVF, TQPK…PPVF, PTDM…TPKF, SRPV…PPIF, SLNS…PPTF, FLSP…NPIF, AQAL…VPVF, ELSP…VPTF, ASKA…PPRF, QHHP…FPKV, RAKE…APIF, KEDP…APRF, FSQI…APRF, SRTS…APQF, LKSK…TPEF, SQSH…SPVF, LSDD…VPRF, VSKL…PPIF, TLNI…GPML, and MLTV…VEIF. 2 N-linked (GlcNAc...) asparagine glycosylation sites follow: Asn-84 and Asn-237. N-linked (GlcNAc...) asparagine glycans are attached at residues Asn-393, Asn-416, Asn-435, Asn-483, Asn-551, Asn-615, Asn-676, Asn-721, Asn-825, Asn-880, Asn-946, Asn-1085, Asn-1101, Asn-1104, Asn-1225, Asn-1296, Asn-1389, and Asn-1514. Asn-1828, Asn-1899, Asn-1967, and Asn-2119 each carry an N-linked (GlcNAc...) asparagine glycan. Asn-2387 and Asn-2430 each carry an N-linked (GlcNAc...) asparagine glycan. Asn-2921, Asn-2937, Asn-3036, Asn-3140, Asn-3217, Asn-3392, and Asn-3477 each carry an N-linked (GlcNAc...) asparagine glycan. Residues Asn-3706 and Asn-3758 are each glycosylated (N-linked (GlcNAc...) asparagine). The EGF-like 1 domain occupies 3802-3860; it reads DHDSCVHGPCQNGGSCLRRLAVSSVLKSRESLPVIIVANEPLQPFLCKCLPGYAGSWCE. 12 cysteine pairs are disulfide-bonded: Cys-3806/Cys-3817, Cys-3811/Cys-3848, Cys-3850/Cys-3859, Cys-3866/Cys-3877, Cys-3871/Cys-3886, Cys-3888/Cys-3897, Cys-3904/Cys-3915, Cys-3909/Cys-3924, Cys-3926/Cys-3935, Cys-3942/Cys-3953, Cys-3947/Cys-3962, and Cys-3964/Cys-3973. Residues 3862–3898 form the EGF-like 2; calcium-binding domain; sequence DIDECLPSPCHSGGTCHNLVGGFSCSCPDGFTGRACE. The EGF-like 3; calcium-binding domain maps to 3900 to 3936; it reads DINECLQSPCKNGAICQNFPGSFNCVCKTGYTGKMCE. In terms of domain architecture, EGF-like 4 spans 3938–3974; that stretch reads SVNYCECNPCFNGGSCQSGVDSYYCHCPFGVFGKHCE. The Laminin G-like 1 domain maps to 3975–4159; that stretch reads LNSYGFEELS…LAAQGILDQC (185 aa). N-linked (GlcNAc...) asparagine glycosylation occurs at Asn-4017. Intrachain disulfides connect Cys-4133-Cys-4159, Cys-4166-Cys-4177, Cys-4171-Cys-4186, and Cys-4188-Cys-4197. In terms of domain architecture, EGF-like 5 spans 4162-4198; that stretch reads LEGACTRSPCQHGGTCMDYWSWQQCHCKEGLTGKYCE. The 182-residue stretch at 4217–4398 folds into the Laminin G-like 2 domain; the sequence is YHMSQNEKRE…KTDPSVKIGC (182 aa). Asn-4267 and Asn-4312 each carry an N-linked (GlcNAc...) asparagine glycan. Cystine bridges form between Cys-4365–Cys-4398, Cys-4430–Cys-4441, Cys-4435–Cys-4451, and Cys-4453–Cys-4462. In terms of domain architecture, EGF-like 6 spans 4426 to 4463; that stretch reads PPGDCASHPCQNGGSCEPGLHSGFTCSCPDSHTGRTCE. A helical membrane pass occupies residues 4505-4525; it reads VPAIVGSCATVLALLVLSLIL. Topologically, residues 4526 to 4981 are cytoplasmic; the sequence is CNQCRGKKAK…PKDGEAEQYV (456 aa). Disordered regions lie at residues 4534–4584, 4680–4713, 4752–4856, 4869–4911, and 4957–4981; these read AKNP…PDII, QGLR…STFY, RSKS…MEYD, KLSQ…AAPG, and AAAN…EQYV. A compositionally biased stretch (polar residues) spans 4680–4699; sequence QGLRTSSLSHSACPTPNPLS. The interval 4706–4795 is necessary and sufficient for interaction with MPDZ; it reads FSKSSTFYRN…GLSIEEVERL (90 aa). Positions 4809-4821 are enriched in basic and acidic residues; the sequence is DHGRSSSEEDCRR. Residue Ser-4876 is modified to Phosphoserine. A compositionally biased stretch (basic and acidic residues) spans 4971–4981; it reads VPKDGEAEQYV.

Heterophilic interaction with DCHS1; this interaction affects their respective protein levels. Interacts (via cytoplasmic domain) with MPDZ. Forms a complex with PALS1 and MPDZ. As to expression, widely expressed. Expressed in fetal brain, infant brain, brain tumor and colorectal cancer.

Its subcellular location is the membrane. Cadherins are calcium-dependent cell adhesion proteins. FAT4 plays a role in the maintenance of planar cell polarity as well as in inhibition of YAP1-mediated neuroprogenitor cell proliferation and differentiation. The polypeptide is Protocadherin Fat 4 (FAT4) (Homo sapiens (Human)).